The following is a 143-amino-acid chain: Transcriptional regulator MraZ (143 aa).

SpoVT-AbrB domains follow at residues E5–E47 and A76–R119.

It belongs to the MraZ family. Forms oligomers.

It is found in the cytoplasm. It localises to the nucleoid. This is Transcriptional regulator MraZ from Pediococcus pentosaceus (strain ATCC 25745 / CCUG 21536 / LMG 10740 / 183-1w).